Here is a 412-residue protein sequence, read N- to C-terminus: Alpha-ketoglutarate-dependent sulfonate dioxygenase (412 aa).

A Phosphoserine modification is found at serine 52. Residues histidine 218 and aspartate 220 each coordinate Fe cation. Positions 245 and 352 each coordinate 2-oxoglutarate. Histidine 367 contacts Fe cation. Arginine 379 and arginine 383 together coordinate 2-oxoglutarate.

The protein belongs to the TfdA dioxygenase family. The cofactor is Fe(2+).

It participates in organosulfur degradation; alkanesulfonate degradation. Its function is as follows. Acts as an alpha-ketoglutarate-dependent dioxygenase active on sulfonates. Although taurine is a poor substrate, a variety of other sulfonates are utilized, with the best natural substrates being isethionate and taurocholate. The polypeptide is Alpha-ketoglutarate-dependent sulfonate dioxygenase (JLP1) (Saccharomyces cerevisiae (strain ATCC 204508 / S288c) (Baker's yeast)).